A 364-amino-acid polypeptide reads, in one-letter code: Mannose-1-phosphate guanyltransferase (364 aa).

It belongs to the transferase hexapeptide repeat family.

It is found in the cytoplasm. It carries out the reaction alpha-D-mannose 1-phosphate + GTP + H(+) = GDP-alpha-D-mannose + diphosphate. Its pathway is nucleotide-sugar biosynthesis; GDP-alpha-D-mannose biosynthesis; GDP-alpha-D-mannose from alpha-D-mannose 1-phosphate (GTP route): step 1/1. Its function is as follows. Involved in cell wall synthesis where it is required for glycosylation. Involved in cell cycle progression through cell-size checkpoint. In Pichia angusta (Yeast), this protein is Mannose-1-phosphate guanyltransferase (MPG1).